We begin with the raw amino-acid sequence, 316 residues long: tRNA dimethylallyltransferase (316 aa).

Residue 17–24 (GPTASGKT) participates in ATP binding. 19–24 (TASGKT) serves as a coordination point for substrate. 4 interaction with substrate tRNA regions span residues 42-45 (DSAL), 166-170 (QRLSR), 247-252 (RCVGYR), and 280-287 (KRQITWLR).

This sequence belongs to the IPP transferase family. In terms of assembly, monomer. It depends on Mg(2+) as a cofactor.

It carries out the reaction adenosine(37) in tRNA + dimethylallyl diphosphate = N(6)-dimethylallyladenosine(37) in tRNA + diphosphate. Functionally, catalyzes the transfer of a dimethylallyl group onto the adenine at position 37 in tRNAs that read codons beginning with uridine, leading to the formation of N6-(dimethylallyl)adenosine (i(6)A). The protein is tRNA dimethylallyltransferase of Shigella boydii serotype 18 (strain CDC 3083-94 / BS512).